Reading from the N-terminus, the 342-residue chain is Nucleoid-associated protein Shewmr7_2293 (342 aa).

Belongs to the YejK family.

The protein localises to the cytoplasm. Its subcellular location is the nucleoid. The polypeptide is Nucleoid-associated protein Shewmr7_2293 (Shewanella sp. (strain MR-7)).